A 565-amino-acid polypeptide reads, in one-letter code: Adenine deaminase 1 (565 aa).

Belongs to the metallo-dependent hydrolases superfamily. Adenine deaminase family. The cofactor is Mn(2+).

The enzyme catalyses adenine + H2O + H(+) = hypoxanthine + NH4(+). The polypeptide is Adenine deaminase 1 (Rhizobium etli (strain ATCC 51251 / DSM 11541 / JCM 21823 / NBRC 15573 / CFN 42)).